Reading from the N-terminus, the 141-residue chain is Hemoglobin subunit alpha-A (141 aa).

Positions 1 to 141 (VLSAADKTNV…VGAVLTAKYR (141 aa)) constitute a Globin domain. Residue His58 participates in O2 binding. Residue His87 coordinates heme b.

Belongs to the globin family. In terms of assembly, heterotetramer of two alpha chains and two beta chains. Red blood cells.

In terms of biological role, involved in oxygen transport from the lung to the various peripheral tissues. In Cygnus olor (Mute swan), this protein is Hemoglobin subunit alpha-A (HBAA).